Reading from the N-terminus, the 250-residue chain is 3-deoxy-manno-octulosonate cytidylyltransferase (250 aa).

The protein belongs to the KdsB family.

It localises to the cytoplasm. It carries out the reaction 3-deoxy-alpha-D-manno-oct-2-ulosonate + CTP = CMP-3-deoxy-beta-D-manno-octulosonate + diphosphate. The protein operates within nucleotide-sugar biosynthesis; CMP-3-deoxy-D-manno-octulosonate biosynthesis; CMP-3-deoxy-D-manno-octulosonate from 3-deoxy-D-manno-octulosonate and CTP: step 1/1. It participates in bacterial outer membrane biogenesis; lipopolysaccharide biosynthesis. In terms of biological role, activates KDO (a required 8-carbon sugar) for incorporation into bacterial lipopolysaccharide in Gram-negative bacteria. This Legionella pneumophila (strain Lens) protein is 3-deoxy-manno-octulosonate cytidylyltransferase.